Consider the following 160-residue polypeptide: Eosinophil cationic protein (160 aa).

The N-terminal stretch at 1–27 (MVPKLFTSQICLLLLLGLMGVEGSLHA) is a signal peptide. The segment at 28–72 (RPPQFTKAQWFAIQHINVNPPRCTIAMRVINNYQRRCKNQNTFLR) is required for nearly all of the bactericidal activities; partially involved in LPS-binding. His42 serves as the catalytic Proton acceptor. 4 cysteine pairs are disulfide-bonded: Cys50–Cys110, Cys64–Cys123, Cys82–Cys138, and Cys89–Cys98. A 3'-nitrotyrosine modification is found at Tyr60. 65–69 (KNQNT) serves as a coordination point for substrate. N-linked (GlcNAc...) asparagine glycosylation is found at Asn92 and Asn119. Catalysis depends on His155, which acts as the Proton donor.

The protein belongs to the pancreatic ribonuclease family. As to quaternary structure, interacts with bacterial lipopolysaccharide (LPS) and lipoteichoic acid (LTA). In vitro interacts with phospholipid bilayers.

The protein resides in the secreted. Its function is as follows. Cytotoxin and helminthotoxin with low-efficiency ribonuclease activity. Possesses a wide variety of biological activities. Exhibits antibacterial activity. The polypeptide is Eosinophil cationic protein (RNASE3) (Macaca fascicularis (Crab-eating macaque)).